Reading from the N-terminus, the 491-residue chain is MDFLTYLPSWLLPAVVILTISCILMLWTKPSKGASGLNLPPGPPSLPLIGNLHQLIGKSFHETVYKLAEKYGPIMHIHMGSQPVVVISSSALATEAFKTHDHILANRQYSNNLRRLTFDYNDIAWAPYGDHSKHMRRVLVTEFLNSRMSKSFKKVLDMEVKSMLDNLPYGTETNLNKVFGNFVCDFTSKVVTGKSYRDVKIRGKTMKEMLDEMIILFSGSFSEIFPKYGWILEDLSGWTRRVDKHMANYNDLLELMIDEHLDHTSEDEKDMIDACRPLLNREEMKAIMSNVYNGAIDTSYLTLVWAMSEIVKNPRVMHKLQDEIRSNAGNKARLDETDTSKMTYLKYVVKETLRRHGPSPFLIPRDCVSHIQIGGYDILPGTKVLINAWGIAKDPKVWTENANEFHPDRFENHVLEQFHMVPFGGGRRACPGYNFATLNIEVVLANLLYSIDWKLPPGLTLEDFNMEEEGSLLVTKKTPLYLVPIKHNTQA.

The chain crosses the membrane as a helical; Signal-anchor for type II membrane protein span at residues 7–27 (LPSWLLPAVVILTISCILMLW). Position 430 (C430) interacts with heme.

Belongs to the cytochrome P450 family. The cofactor is heme. Expressed in leaf primordia.

It localises to the membrane. It carries out the reaction 8beta-hydroxygermacra-1(10),4,11(13)-trien-12-oate + reduced [NADPH--hemoprotein reductase] + O2 = eupatolide + oxidized [NADPH--hemoprotein reductase] + 2 H2O. Its pathway is secondary metabolite biosynthesis; terpenoid biosynthesis. Involved in the biosynthesis of germacrene-derived sesquiterpene lactones. Hydroxylates 8-beta-hydroxy-germacrene A acid to 6-alpha,8-beta-hydroxy-germacrene A acid, which, in turn, undergo spontaneous lactonization to become eupatolide. The polypeptide is Eupatolide synthase (Helianthus annuus (Common sunflower)).